The sequence spans 321 residues: Lipoyl synthase (321 aa).

[4Fe-4S] cluster contacts are provided by cysteine 68, cysteine 73, cysteine 79, cysteine 94, cysteine 98, cysteine 101, and serine 308. The region spanning 80–297 (FNHGTATFMI…KEVALELGFT (218 aa)) is the Radical SAM core domain.

It belongs to the radical SAM superfamily. Lipoyl synthase family. It depends on [4Fe-4S] cluster as a cofactor.

It localises to the cytoplasm. It catalyses the reaction [[Fe-S] cluster scaffold protein carrying a second [4Fe-4S](2+) cluster] + N(6)-octanoyl-L-lysyl-[protein] + 2 oxidized [2Fe-2S]-[ferredoxin] + 2 S-adenosyl-L-methionine + 4 H(+) = [[Fe-S] cluster scaffold protein] + N(6)-[(R)-dihydrolipoyl]-L-lysyl-[protein] + 4 Fe(3+) + 2 hydrogen sulfide + 2 5'-deoxyadenosine + 2 L-methionine + 2 reduced [2Fe-2S]-[ferredoxin]. Its pathway is protein modification; protein lipoylation via endogenous pathway; protein N(6)-(lipoyl)lysine from octanoyl-[acyl-carrier-protein]: step 2/2. In terms of biological role, catalyzes the radical-mediated insertion of two sulfur atoms into the C-6 and C-8 positions of the octanoyl moiety bound to the lipoyl domains of lipoate-dependent enzymes, thereby converting the octanoylated domains into lipoylated derivatives. The chain is Lipoyl synthase from Vibrio cholerae serotype O1 (strain ATCC 39315 / El Tor Inaba N16961).